The primary structure comprises 386 residues: MLQLNPTPPAPGRWRTILENDFFPKNRRRDIDGLRGLAIALVVLFHAGWLKGGFIGVDVFVVISGYFMGRSALMQHPFQPVRFVCRRLYRLLPALLCMVALVSAGMLWWVLQSDRADIALNGAYALVYLSNIWASGHVGYFQGQAVAYPFLHTWSLSLEMQFYAIIFIMALLLPLTRHRRLVLSAIFSASAAYCAYAWHTGDSQAYYNILDRLWQFALGTMVWMLPRPKLPRAAADAVYAAAVAVIVGAGLFYPLSYACPSWMTVFPCGAVVLIIMLPDTRVGRWCLVPLSPLGVISYSVYLWHWPGIVVANYLLFFQVHGAMMAGVLALVMVVSLLSYVLVERTGLDYENRAPVAARNRGAALLVAACLGLAAVLAYISHVSRVH.

Helical transmembrane passes span 37–57 (LAIA…FIGV), 91–111 (LLPA…WWVL), 118–138 (IALN…SGHV), 156–176 (LSLE…LPLT), 181–201 (LVLS…WHTG), 237–257 (AVYA…PLSY), 258–278 (ACPS…IMLP), 290–310 (LSPL…GIVV), 322–342 (AMMA…YVLV), and 362–382 (AALL…ISHV).

It belongs to the acyltransferase 3 family.

Its subcellular location is the cell inner membrane. It participates in glycan metabolism; bacterial cellulose biosynthesis. Its function is as follows. May acylate a glucose moiety into cellulose fibrils, in cooperation with BcsABII and BcsCII. This chain is Putative membrane-bound transacylase BcsY (bcsY), found in Komagataeibacter xylinus (Gluconacetobacter xylinus).